The primary structure comprises 274 residues: Glutamate racemase (274 aa).

Residues 9-10 (DS) and 41-42 (YG) contribute to the substrate site. The Proton donor/acceptor role is filled by Cys-73. Position 74 to 75 (74 to 75 (NT)) interacts with substrate. Cys-183 (proton donor/acceptor) is an active-site residue. 184–185 (TH) provides a ligand contact to substrate.

Belongs to the aspartate/glutamate racemases family.

The catalysed reaction is L-glutamate = D-glutamate. The protein operates within cell wall biogenesis; peptidoglycan biosynthesis. Functionally, provides the (R)-glutamate required for cell wall biosynthesis. The polypeptide is Glutamate racemase (Shewanella baltica (strain OS195)).